Here is a 186-residue protein sequence, read N- to C-terminus: MASSMLSNAAVATTAASRSAGAQASMVAPFTGLKSVSAFPVTRKSSNDLSTVPSNGGKVQCMQVWPPLGKKKFETLSYLPPLSEESLLKEVQYLLNNGWVPCLEFEPTHGFVYREHGNTPGYYDGRYWTMWKLPMFGCTDPSQVVAELEEAKKAYPEAFIRIIGFDNVRQVQCVSFIAYKPASYDA.

The N-terminal 60 residues, 1–60 (MASSMLSNAAVATTAASRSAGAQASMVAPFTGLKSVSAFPVTRKSSNDLSTVPSNGGKVQ), are a transit peptide targeting the chloroplast.

This sequence belongs to the RuBisCO small chain family. Heterohexadecamer of 8 large and 8 small subunits.

The protein localises to the plastid. It is found in the chloroplast. RuBisCO catalyzes two reactions: the carboxylation of D-ribulose 1,5-bisphosphate, the primary event in carbon dioxide fixation, as well as the oxidative fragmentation of the pentose substrate. Both reactions occur simultaneously and in competition at the same active site. Although the small subunit is not catalytic it is essential for maximal activity. The protein is Ribulose bisphosphate carboxylase small subunit, chloroplastic 6 of Mesembryanthemum crystallinum (Common ice plant).